A 420-amino-acid chain; its full sequence is Serine hydroxymethyltransferase (420 aa).

(6S)-5,6,7,8-tetrahydrofolate is bound by residues L121 and 125–127 (GHL). K229 bears the N6-(pyridoxal phosphate)lysine mark. 355–357 (SPF) lines the (6S)-5,6,7,8-tetrahydrofolate pocket.

The protein belongs to the SHMT family. As to quaternary structure, homodimer. It depends on pyridoxal 5'-phosphate as a cofactor.

It is found in the cytoplasm. The enzyme catalyses (6R)-5,10-methylene-5,6,7,8-tetrahydrofolate + glycine + H2O = (6S)-5,6,7,8-tetrahydrofolate + L-serine. Its pathway is one-carbon metabolism; tetrahydrofolate interconversion. It participates in amino-acid biosynthesis; glycine biosynthesis; glycine from L-serine: step 1/1. Functionally, catalyzes the reversible interconversion of serine and glycine with tetrahydrofolate (THF) serving as the one-carbon carrier. This reaction serves as the major source of one-carbon groups required for the biosynthesis of purines, thymidylate, methionine, and other important biomolecules. Also exhibits THF-independent aldolase activity toward beta-hydroxyamino acids, producing glycine and aldehydes, via a retro-aldol mechanism. The protein is Serine hydroxymethyltransferase of Chromohalobacter salexigens (strain ATCC BAA-138 / DSM 3043 / CIP 106854 / NCIMB 13768 / 1H11).